We begin with the raw amino-acid sequence, 492 residues long: Alpha-amylase-related protein (492 aa).

The signal sequence occupies residues 1 to 18 (MRLSLSVLLCLGLALTLA). A Pyrrolidone carboxylic acid modification is found at Q19. Cysteines 46 and 102 form a disulfide. Residues N116, Q167, and D176 each contribute to the Ca(2+) site. Residues C155 and C169 are joined by a disulfide bond. Position 204 (R204) interacts with chloride. D206 serves as the catalytic Nucleophile. H210 is a binding site for Ca(2+). E243 acts as the Proton donor in catalysis. N306 and R341 together coordinate chloride. Disulfide bonds link C374–C380, C416–C439, and C446–C458.

This sequence belongs to the glycosyl hydrolase 13 family. As to quaternary structure, monomer. Requires Ca(2+) as cofactor. Chloride serves as cofactor.

It localises to the secreted. The catalysed reaction is Endohydrolysis of (1-&gt;4)-alpha-D-glucosidic linkages in polysaccharides containing three or more (1-&gt;4)-alpha-linked D-glucose units.. The protein is Alpha-amylase-related protein (Amyrel) of Drosophila willistoni (Fruit fly).